A 696-amino-acid chain; its full sequence is Serine/threonine-protein kinase sck1 (696 aa).

Disordered regions lie at residues 1–59 (MTEI…YDPV) and 77–118 (HKEQ…TPPS). A compositionally biased stretch (polar residues) spans 11–37 (SSNSENTNQASPSTIQSHSTQPVLSND). 2 stretches are compositionally biased toward basic and acidic residues: residues 38–49 (HSTKVNDYEGKE) and 77–88 (HKEQSLKEDKES). The C2 domain occupies 122 to 272 (IRHDTVVPKD…VQEAWYKLEP (151 aa)). The 262-residue stretch at 302–563 (FTALRLIGKG…TTELKEHPFF (262 aa)) folds into the Protein kinase domain. Residues 308 to 316 (IGKGTFGQV) and K331 each bind ATP. Catalysis depends on D428, which acts as the Proton acceptor. An AGC-kinase C-terminal domain is found at 564–643 (ADINWDLLSK…VNKSIDEQFQ (80 aa)). Position 632 is a phosphothreonine (T632). Phosphoserine is present on S665.

This sequence belongs to the protein kinase superfamily. AGC Ser/Thr protein kinase family. cAMP subfamily.

It carries out the reaction L-seryl-[protein] + ATP = O-phospho-L-seryl-[protein] + ADP + H(+). It catalyses the reaction L-threonyl-[protein] + ATP = O-phospho-L-threonyl-[protein] + ADP + H(+). In terms of biological role, protein kinase that is part of growth control pathway which is at least partially redundant with the cAMP pathway. Required for trehalase activation. This chain is Serine/threonine-protein kinase sck1 (sck1), found in Schizosaccharomyces pombe (strain 972 / ATCC 24843) (Fission yeast).